We begin with the raw amino-acid sequence, 665 residues long: SH3 domain-containing kinase-binding protein 1 (665 aa).

2 SH3 domains span residues 1–58 (MVEA…EIKK) and 98–157 (RRRR…ELSG). Phosphoserine occurs at positions 156, 159, 183, and 230. The segment at 159–200 (SDELGISQDEQLSKSSLRETTGSESDGGDSSSTKSEGANGTV) is disordered. Residues 177–195 (ETTGSESDGGDSSSTKSEG) show a composition bias toward low complexity. Thr254 carries the phosphothreonine modification. Positions 267–328 (KSKDYCKVIF…PDNFVKLLPP (62 aa)) constitute an SH3 3 domain. Disordered stretches follow at residues 328–444 (PDFE…LAGS) and 467–610 (DSVV…AAVE). Positions 355–390 (TERKHEIKKIPPERPEMLPNRTEEKERPEREPKLDL) are enriched in basic and acidic residues. Ser436 carries the phosphoserine modification. Positions 469–484 (VVSSTEKLSHPTTSRP) are enriched in polar residues. Residues 491–510 (PPSQSLTSSSLSSPDIFDSP) are compositionally biased toward low complexity. 3 positions are modified to phosphoserine: Ser509, Ser511, and Ser521. Basic and acidic residues predominate over residues 517-531 (EEHISLAHRGVDASK). Residues 535–546 (KTVTISQVSDNK) show a composition bias toward polar residues. The span at 564–582 (APLSSAAPSPLSSSLGTAG) shows a compositional bias: low complexity. Ser587 carries the post-translational modification Phosphoserine. Residues 602–664 (AASSQAAVEE…VNDIKKALQS (63 aa)) are a coiled coil.

In terms of assembly, can self-associate and form homotetramers. Interacts with CD2, F-actin capping protein, PIK3R3, GRB2, EGFR, MET, BLNK, MAP3K4, PDCD6IP, SPRY2, ARHGAP17, ARHGAP27, MAGI2, CRK, BCAR1, SOS1, ASAP1, ARAP3, HIP1R, SYNJ2, INPP5D and STAP1. Interacts with E3 ubiquitin-protein ligases CBL and CBLB, but does not interact with CBLC. Two molecules of SH3KBP1 seem to bind through their respective SH3 1 domain to one molecule of CBLB. The interaction with CBL or CBLB and EGFR is increased upon EGF stimulation. The interaction with CBL is attenuated by PDCD6IP. Interacts (via SH3 domains) with ARAP1. The interaction is independent of EGF and does not affect ARAP1 GTPase-activating activity but is involved in regulating ubiquitination and endocytic trafficking of EGFR. ARAP1 competes with CBL for binding to SH3KBP1 and prevents interaction of CBL with SH3KBP1; this is likely to regulate SH3KBP1-mediated internalization of EGFR. Interacts through its proline-rich region with the SH3 domain of endophilins SH3GL1, SH3GL2 and SH3GL3. The SH3KBP1-endophilin complex seems to associate with a complex containing the phosphorylated receptor (EGFR or MET) and phosphorylated CBL. Probably associates with ASAP1 and phosphorylated EGFR. Probably part of a complex consisting of at least SH3KBP1, ASAP1 and ARAP3. Interacts with focal adhesion kinases PTK2/FAK1 and PTK2B/PYK2, probably as a dimer. Interacts with DAB2 and probably associates with chathrin through its interaction with DAB2. Part of a complex consisting of SH3KBP1, DAB2, and clathrin heavy chain. DAB2 and clathrin dissociate from SH3KBP1 following growth factor treatment, enabling interaction with CBL. Interacts with DDN and probably associates with MAGI2 through its interaction with DDN. Interacts with the SH3 domains of SRC tyrosine-protein kinases SRC, LCK, LYN, FGR, FYN and HCK. Interacts with TRADD, BIRC2, TRAF1, TRAF2 and TNFR1, and the association with a TNFR1-associated complex upon stimulation with TNF-alpha seems to be mediated by SRC. Interacts (via SH3 domains) with SHKBP1 (via PXXXPR motifs). Interaction with CBL is abolished in the presence of SHKBP1. Interacts (via SH3 domains) with ZFP36 (via extreme C-terminal region). Interacts with MAP3K4; this interaction enhances the association with ZFP36. As to quaternary structure, (Microbial infection) Interacts (via SH3 domains) with Chikungunya virus non-structural protein 3 (via C-terminus); this interaction plays a role in initiation of viral replication. In terms of processing, monoubiquitinated by CBL and CBLB after EGF stimulation; probably on its C-terminus. In terms of tissue distribution, ubiquitously expressed. Also expressed in some cancer cell lines.

Its subcellular location is the cytoplasm. It is found in the cytoskeleton. The protein localises to the cytoplasmic vesicle membrane. The protein resides in the synapse. It localises to the synaptosome. Its subcellular location is the cell junction. It is found in the focal adhesion. In terms of biological role, adapter protein involved in regulating diverse signal transduction pathways. Involved in the regulation of endocytosis and lysosomal degradation of ligand-induced receptor tyrosine kinases, including EGFR and MET/hepatocyte growth factor receptor, through an association with CBL and endophilins. The association with CBL, and thus the receptor internalization, may be inhibited by an interaction with PDCD6IP and/or SPRY2. Involved in regulation of ligand-dependent endocytosis of the IgE receptor. Attenuates phosphatidylinositol 3-kinase activity by interaction with its regulatory subunit. May be involved in regulation of cell adhesion; promotes the interaction between TTK2B and PDCD6IP. May be involved in the regulation of cellular stress response via the MAPK pathways through its interaction with MAP3K4. Is involved in modulation of tumor necrosis factor mediated apoptosis. Plays a role in the regulation of cell morphology and cytoskeletal organization. Required in the control of cell shape and migration. Has an essential role in the stimulation of B cell activation. The sequence is that of SH3 domain-containing kinase-binding protein 1 (SH3KBP1) from Homo sapiens (Human).